Consider the following 241-residue polypeptide: Probable transcriptional regulatory protein LMOf2365_1554 (241 aa).

The segment covering 1–14 (MSGHSKWNNIQGRK) has biased composition (polar residues). The interval 1-22 (MSGHSKWNNIQGRKNAQDSKRS) is disordered.

This sequence belongs to the TACO1 family.

The protein localises to the cytoplasm. The sequence is that of Probable transcriptional regulatory protein LMOf2365_1554 from Listeria monocytogenes serotype 4b (strain F2365).